The primary structure comprises 119 residues: Ribonuclease P protein component (119 aa).

Belongs to the RnpA family. In terms of assembly, consists of a catalytic RNA component (M1 or rnpB) and a protein subunit.

The catalysed reaction is Endonucleolytic cleavage of RNA, removing 5'-extranucleotides from tRNA precursor.. Functionally, RNaseP catalyzes the removal of the 5'-leader sequence from pre-tRNA to produce the mature 5'-terminus. It can also cleave other RNA substrates such as 4.5S RNA. The protein component plays an auxiliary but essential role in vivo by binding to the 5'-leader sequence and broadening the substrate specificity of the ribozyme. The protein is Ribonuclease P protein component of Mycolicibacterium paratuberculosis (strain ATCC BAA-968 / K-10) (Mycobacterium paratuberculosis).